Reading from the N-terminus, the 195-residue chain is GTP cyclohydrolase 1 (195 aa).

Zn(2+)-binding residues include cysteine 85, histidine 88, and cysteine 157.

Belongs to the GTP cyclohydrolase I family. As to quaternary structure, toroid-shaped homodecamer, composed of two pentamers of five dimers.

The enzyme catalyses GTP + H2O = 7,8-dihydroneopterin 3'-triphosphate + formate + H(+). The protein operates within cofactor biosynthesis; 7,8-dihydroneopterin triphosphate biosynthesis; 7,8-dihydroneopterin triphosphate from GTP: step 1/1. This is GTP cyclohydrolase 1 from Clostridium acetobutylicum (strain ATCC 824 / DSM 792 / JCM 1419 / IAM 19013 / LMG 5710 / NBRC 13948 / NRRL B-527 / VKM B-1787 / 2291 / W).